Reading from the N-terminus, the 235-residue chain is uncharacterized protein (235 aa).

A helical membrane pass occupies residues 27–47; it reads AMKLWSTWITLLILTFFCSEC. The region spanning 124–185 is the CX domain; that stretch reads YFWGESKYVP…CCGYDCCSNS (62 aa). The helical transmembrane segment at 187 to 207 threads the bilayer; that stretch reads IFTSIFSLLVILLIVSVLSIF.

The protein localises to the membrane. This is an uncharacterized protein from Caenorhabditis elegans.